A 349-amino-acid chain; its full sequence is GDSL esterase/lipase At2g19060 (349 aa).

A signal peptide spans 1 to 25 (MADKMFKALLWAFATAVVMAEAVRG). Residue S37 is the Nucleophile of the active site. N178 is a glycosylation site (N-linked (GlcNAc...) asparagine). Catalysis depends on residues D317 and H320.

This sequence belongs to the 'GDSL' lipolytic enzyme family.

It localises to the secreted. This chain is GDSL esterase/lipase At2g19060, found in Arabidopsis thaliana (Mouse-ear cress).